Here is a 209-residue protein sequence, read N- to C-terminus: CASP-like protein 1A1 (209 aa).

Residues 1–26 (MEEAKHNEAEEAQGIEAREAKQIEAG) form a disordered region. Topologically, residues 1-49 (MEEAKHNEAEEAQGIEAREAKQIEAGETSRSSRKLITFEPKLVINKGIS) are cytoplasmic. A helical membrane pass occupies residues 50 to 70 (VLGFVLRLFAVFGTIGSALAM). Residues 71-95 (GTTHESVVSLSQLVLLKVKYSDLPT) are Extracellular-facing. Residues 96–116 (LMFFVVANAISGGYLVLSLPV) form a helical membrane-spanning segment. Residues 117–130 (SIFHIFSTQAKTSR) are Cytoplasmic-facing. The helical transmembrane segment at 131-151 (IILLVVDTVMLALVSSGASAA) threads the bilayer. Topologically, residues 152-183 (TATVYLAHEGNTTANWPPICQQFDGFCERISG) are extracellular. Residue Asn162 is glycosylated (N-linked (GlcNAc...) asparagine). A helical membrane pass occupies residues 184 to 204 (SLIGSFCAVILLMLIVINSAI). The Cytoplasmic segment spans residues 205–209 (SLSRH).

Belongs to the Casparian strip membrane proteins (CASP) family. In terms of assembly, homodimer and heterodimers. Expressed in the root endodermis.

The protein localises to the cell membrane. This chain is CASP-like protein 1A1, found in Arabidopsis thaliana (Mouse-ear cress).